An 857-amino-acid polypeptide reads, in one-letter code: Dynein regulatory complex protein 11 (857 aa).

An IQ domain is found at 206–235 (TKLAALQIQKVWRGFHQCKKTVKEREEEMV). The disordered stretch occupies residues 348–388 (EEKLKKKKKKEDKENKGKKGKKEKKEKKEKKVSLKEKAMKD). Basic residues predominate over residues 365 to 375 (KKGKKEKKEKK). Positions 376 to 387 (EKKVSLKEKAMK) are enriched in basic and acidic residues. 598–605 (GPSGVGKK) is an ATP binding site. The tract at residues 834 to 857 (SLTVGNKEKEKDKGKKGKRGKKKK) is disordered. Basic residues predominate over residues 847-857 (GKKGKRGKKKK).

This sequence belongs to the AAA ATPase family. DRC11 subfamily. As to quaternary structure, component of the nexin-dynein regulatory complex (N-DRC).

It localises to the cytoplasm. The protein localises to the cytoskeleton. The protein resides in the flagellum axoneme. Component of the nexin-dynein regulatory complex (N-DRC), a key regulator of ciliary/flagellar motility which maintains the alignment and integrity of the distal axoneme and regulates microtubule sliding in motile axonemes. In Mus musculus (Mouse), this protein is Dynein regulatory complex protein 11 (Iqca1).